The chain runs to 99 residues: Integration host factor subunit alpha (99 aa).

The protein belongs to the bacterial histone-like protein family. In terms of assembly, heterodimer of an alpha and a beta chain.

Functionally, this protein is one of the two subunits of integration host factor, a specific DNA-binding protein that functions in genetic recombination as well as in transcriptional and translational control. The protein is Integration host factor subunit alpha (ihfA) of Xylella fastidiosa (strain 9a5c).